Reading from the N-terminus, the 309-residue chain is tRNA-cytidine(32) 2-sulfurtransferase (309 aa).

Positions 45–50 (SGGKDS) match the PP-loop motif motif. The [4Fe-4S] cluster site is built by cysteine 120, cysteine 123, and cysteine 211.

This sequence belongs to the TtcA family. In terms of assembly, homodimer. The cofactor is Mg(2+). It depends on [4Fe-4S] cluster as a cofactor.

The protein resides in the cytoplasm. It carries out the reaction cytidine(32) in tRNA + S-sulfanyl-L-cysteinyl-[cysteine desulfurase] + AH2 + ATP = 2-thiocytidine(32) in tRNA + L-cysteinyl-[cysteine desulfurase] + A + AMP + diphosphate + H(+). It participates in tRNA modification. Functionally, catalyzes the ATP-dependent 2-thiolation of cytidine in position 32 of tRNA, to form 2-thiocytidine (s(2)C32). The sulfur atoms are provided by the cysteine/cysteine desulfurase (IscS) system. The polypeptide is tRNA-cytidine(32) 2-sulfurtransferase (Psychromonas ingrahamii (strain DSM 17664 / CCUG 51855 / 37)).